Consider the following 320-residue polypeptide: Pyrroline-5-carboxylate reductase 2 (320 aa).

S2 carries the N-acetylserine modification. Residues 6–11 and S34 each bind NADP(+); that span reads IGAGQL. Residues A8, Q10, L11, S34, E36, N56, V70, K71, and A97 each contribute to the NADPH site. NADP(+) is bound by residues N56, 69–72, and 95–97; these read AVKP and CAA. Residue E164 coordinates L-proline. N230 contributes to the NADPH binding site. L-proline-binding residues include A237 and T238. Residues 295 to 305 show a composition bias toward low complexity; the sequence is PTVSTLTPSSP. The disordered stretch occupies residues 295-320; that stretch reads PTVSTLTPSSPGKLLTRSLALGGKKD. Position 304 is a phosphoserine (S304).

It belongs to the pyrroline-5-carboxylate reductase family. As to quaternary structure, homodecamer; composed of 5 homodimers. Interacts with LTO1. As to expression, detected in erythrocytes (at protein level). Expressed in fetal brain.

Its subcellular location is the cytoplasm. It is found in the mitochondrion. It catalyses the reaction L-proline + NADP(+) = (S)-1-pyrroline-5-carboxylate + NADPH + 2 H(+). It carries out the reaction L-proline + NAD(+) = (S)-1-pyrroline-5-carboxylate + NADH + 2 H(+). Its pathway is amino-acid biosynthesis; L-proline biosynthesis; L-proline from L-glutamate 5-semialdehyde: step 1/1. Its activity is regulated as follows. Subject to competitive inhibition by NADP. Was reported not to be inhibited by proline. However other study demonstrated an inhibition by proline. Functionally, oxidoreductase that catalyzes the last step in proline biosynthesis, which corresponds to the reduction of pyrroline-5-carboxylate to L-proline using NAD(P)H. At physiologic concentrations, has higher specific activity in the presence of NADH. Involved in cellular response to oxidative stress. In some cell types, such as erythrocytes, its primary function may be the generation of NADP(+). The sequence is that of Pyrroline-5-carboxylate reductase 2 from Homo sapiens (Human).